Consider the following 1050-residue polypeptide: Beta-galactosidase (1050 aa).

Substrate-binding residues include N100 and D199. Residue D199 participates in Na(+) binding. E422, H424, and E467 together coordinate Mg(2+). Substrate is bound by residues E467 and E543–H546. E467 (proton donor) is an active-site residue. E543 (nucleophile) is an active-site residue. N603 contacts Mg(2+). Na(+) contacts are provided by F607 and N610. Substrate-binding residues include N610 and W1025.

This sequence belongs to the glycosyl hydrolase 2 family. In terms of assembly, homotetramer. It depends on Mg(2+) as a cofactor. Requires Na(+) as cofactor.

The catalysed reaction is Hydrolysis of terminal non-reducing beta-D-galactose residues in beta-D-galactosides.. This chain is Beta-galactosidase, found in Yersinia pestis bv. Antiqua (strain Angola).